A 354-amino-acid polypeptide reads, in one-letter code: Serum paraoxonase/arylesterase 2 (354 aa).

C42 and C352 are joined by a disulfide. Residues E53 and D54 each contribute to the Ca(2+) site. Residue H114 is the Proton acceptor of the active site. The Ca(2+) site is built by I116, N167, D168, and N223. An N-linked (GlcNAc...) asparagine glycan is attached at N254. Positions 268 and 269 each coordinate Ca(2+). 2 N-linked (GlcNAc...) asparagine glycosylation sites follow: N269 and N323.

It belongs to the paraoxonase family. In terms of assembly, homotrimer. Ca(2+) is required as a cofactor. Post-translationally, glycosylated. The signal sequence is not cleaved.

It localises to the membrane. It carries out the reaction a phenyl acetate + H2O = a phenol + acetate + H(+). It catalyses the reaction an N-acyl-L-homoserine lactone + H2O = an N-acyl-L-homoserine + H(+). In terms of biological role, capable of hydrolyzing lactones and a number of aromatic carboxylic acid esters. In Bos taurus (Bovine), this protein is Serum paraoxonase/arylesterase 2 (PON2).